Here is a 319-residue protein sequence, read N- to C-terminus: HTH-type transcriptional regulator YidZ (319 aa).

The HTH lysR-type domain occupies 8 to 65 (LDLNLLLCLQLLMQERSVTKAAKRMNVTPSAVSKSLAKLRAWFDDPLFVNSPLGLSPT). The H-T-H motif DNA-binding region spans 25 to 44 (VTKAAKRMNVTPSAVSKSLA).

This sequence belongs to the LysR transcriptional regulatory family.

Involved in anaerobic NO protection. This Escherichia coli O17:K52:H18 (strain UMN026 / ExPEC) protein is HTH-type transcriptional regulator YidZ.